A 98-amino-acid polypeptide reads, in one-letter code: Cell division topological specificity factor (98 aa).

The protein belongs to the MinE family.

Prevents the cell division inhibition by proteins MinC and MinD at internal division sites while permitting inhibition at polar sites. This ensures cell division at the proper site by restricting the formation of a division septum at the midpoint of the long axis of the cell. This Methylorubrum populi (strain ATCC BAA-705 / NCIMB 13946 / BJ001) (Methylobacterium populi) protein is Cell division topological specificity factor.